Here is a 72-residue protein sequence, read N- to C-terminus: DNA-directed RNA polymerase subunit Rpo10 (72 aa).

The Zn(2+) site is built by Cys-7, Cys-10, Cys-53, and Cys-54.

Belongs to the archaeal Rpo10/eukaryotic RPB10 RNA polymerase subunit family. In terms of assembly, part of the RNA polymerase complex. It depends on Zn(2+) as a cofactor.

Its subcellular location is the cytoplasm. The enzyme catalyses RNA(n) + a ribonucleoside 5'-triphosphate = RNA(n+1) + diphosphate. In terms of biological role, DNA-dependent RNA polymerase (RNAP) catalyzes the transcription of DNA into RNA using the four ribonucleoside triphosphates as substrates. This Thermoplasma volcanium (strain ATCC 51530 / DSM 4299 / JCM 9571 / NBRC 15438 / GSS1) protein is DNA-directed RNA polymerase subunit Rpo10.